The primary structure comprises 165 residues: Putative pre-16S rRNA nuclease (165 aa).

This sequence belongs to the YqgF nuclease family.

The protein localises to the cytoplasm. In terms of biological role, could be a nuclease involved in processing of the 5'-end of pre-16S rRNA. The protein is Putative pre-16S rRNA nuclease of Sinorhizobium medicae (strain WSM419) (Ensifer medicae).